The primary structure comprises 450 residues: NAD-specific glutamate dehydrogenase (450 aa).

The substrate site is built by Lys-90, Gln-111, and Lys-114. Lys-126 serves as the catalytic Proton donor. Gly-165 lines the substrate pocket. Residues Thr-210 and Asn-241 each coordinate NAD(+). Residue Ser-381 coordinates substrate.

It belongs to the Glu/Leu/Phe/Val dehydrogenases family. As to quaternary structure, homohexamer.

It catalyses the reaction L-glutamate + NAD(+) + H2O = 2-oxoglutarate + NH4(+) + NADH + H(+). Its pathway is amino-acid degradation; L-glutamate degradation via hydroxyglutarate pathway; crotonoyl-CoA from L-glutamate: step 1/5. The polypeptide is NAD-specific glutamate dehydrogenase (gdh) (Clostridium symbiosum (Bacteroides symbiosus)).